The sequence spans 565 residues: NAD-dependent malic enzyme (565 aa).

Tyr104 serves as the catalytic Proton donor. Arg157 contributes to the NAD(+) binding site. Lys175 acts as the Proton acceptor in catalysis. Positions 246, 247, and 270 each coordinate a divalent metal cation. Asp270 and Asn418 together coordinate NAD(+).

Belongs to the malic enzymes family. As to quaternary structure, homotetramer. Mg(2+) is required as a cofactor. The cofactor is Mn(2+).

It carries out the reaction (S)-malate + NAD(+) = pyruvate + CO2 + NADH. It catalyses the reaction oxaloacetate + H(+) = pyruvate + CO2. This Salmonella arizonae (strain ATCC BAA-731 / CDC346-86 / RSK2980) protein is NAD-dependent malic enzyme.